Here is a 671-residue protein sequence, read N- to C-terminus: Carbohydrate acetyl esterase/feruloyl esterase (671 aa).

A signal peptide spans M1–A24. The tract at residues M1–G296 is carbohydrate acetyl esterase. Catalysis depends on for acetyl esterase activity residues S55, D271, and H274. Residues Y297–K671 are feruloyl esterase.

It in the N-terminal section; belongs to the carbohydrate esterase 6 family.

The catalysed reaction is feruloyl-polysaccharide + H2O = ferulate + polysaccharide.. It participates in glycan degradation; xylan degradation. Functionally, involved in degradation of plant cell wall polysaccharides. Bifunctional esterase that possesses both acetyl esterase and ferulic acid esterase activities. Has deacetylase activity towards acetylated xylo-oligosaccharides smaller than xylo-heptaose, as well as from glucose-pentaacetate. Is also able to release ferulic acid from methylferulate, and from the more natural substrates wheat bran, corn fiber, and XOS(FA,Ac), a corn fiber-derived substrate enriched in O-acetyl and ferulic acid esters. The chain is Carbohydrate acetyl esterase/feruloyl esterase from Xylanibacter ruminicola (strain ATCC 19189 / DSM 19721 / CIP 105475 / JCM 8958 / 23) (Prevotella ruminicola).